A 211-amino-acid chain; its full sequence is Protein-L-isoaspartate O-methyltransferase (211 aa).

The active site involves serine 60.

This sequence belongs to the methyltransferase superfamily. L-isoaspartyl/D-aspartyl protein methyltransferase family.

The protein localises to the cytoplasm. It carries out the reaction [protein]-L-isoaspartate + S-adenosyl-L-methionine = [protein]-L-isoaspartate alpha-methyl ester + S-adenosyl-L-homocysteine. In terms of biological role, catalyzes the methyl esterification of L-isoaspartyl residues in peptides and proteins that result from spontaneous decomposition of normal L-aspartyl and L-asparaginyl residues. It plays a role in the repair and/or degradation of damaged proteins. The chain is Protein-L-isoaspartate O-methyltransferase from Pseudomonas fluorescens (strain SBW25).